The sequence spans 237 residues: HTH-type transcriptional regulator GmuR (237 aa).

One can recognise an HTH gntR-type domain in the interval 1–69 (MNKYEIIANE…RGHGTFIIQS (69 aa)). Positions 29-48 (EVSLAKEFNSSRMTMKRALD) form a DNA-binding region, H-T-H motif.

It is found in the cytoplasm. Functionally, transcriptional repressor of the gmuBACDREFG operon which is involved in the uptake and degradation of glucomannan. The sequence is that of HTH-type transcriptional regulator GmuR (gmuR) from Bacillus subtilis (strain 168).